Consider the following 515-residue polypeptide: Nuclear hormone receptor family member nhr-62 (515 aa).

A DNA-binding region (nuclear receptor) is located at residues 95–170 (NLVCVVCGDQ…AGMNPRAVQS (76 aa)). 2 NR C4-type zinc fingers span residues 98-118 (CVVC…CNGC) and 134-153 (CRFE…CRAC). The disordered stretch occupies residues 169–195 (QSERVEREQNGSPNQIEEDDYKDLSSP). Positions 225-509 (EMAKLSEQIV…YLCHEVQFIQ (285 aa)) constitute an NR LBD domain. The AF-2 stretch occupies residues 498–509 (SEYLCHEVQFIQ).

Belongs to the nuclear hormone receptor family. Widely expressed at a low level in many tissues including the pharynx, sensory neurons, intestine, spermatheca, hypodermis, and excretory cell.

Its subcellular location is the nucleus. In terms of biological role, orphan nuclear hormone receptor. Required for metabolic and physiologic responses associated with dietary-restriction-induced longevity. Modulates triglyceride and lipid metabolism and autophagy, associated with dietary-restriction, probably acting via regulation of transcription of target genes. The sequence is that of Nuclear hormone receptor family member nhr-62 (nhr-62) from Caenorhabditis elegans.